The sequence spans 492 residues: Bifunctional shikimate kinase/3-dehydroquinate synthase (492 aa).

The shikimate kinase stretch occupies residues 1 to 161 (MRIFLVGMMG…TALVVLEALD (161 aa)). 10-15 (GSGKST) lines the ATP pocket. Mg(2+) is bound at residue Ser-14. 3 residues coordinate substrate: Asp-32, Arg-56, and Gly-78. ATP is bound at residue Arg-114. Position 131 (Arg-131) interacts with substrate. The interval 162-492 (EKEISTIEKP…DPLELLEVVD (331 aa)) is 3-dehydroquinate synthase.

In the N-terminal section; belongs to the shikimate kinase family. The protein in the C-terminal section; belongs to the sugar phosphate cyclases superfamily. Dehydroquinate synthase family. Mg(2+) is required as a cofactor. Requires NAD(+) as cofactor. A divalent metal cation serves as cofactor.

The protein resides in the cytoplasm. It catalyses the reaction 7-phospho-2-dehydro-3-deoxy-D-arabino-heptonate = 3-dehydroquinate + phosphate. It carries out the reaction shikimate + ATP = 3-phosphoshikimate + ADP + H(+). It functions in the pathway metabolic intermediate biosynthesis; chorismate biosynthesis; chorismate from D-erythrose 4-phosphate and phosphoenolpyruvate: step 2/7. Its pathway is metabolic intermediate biosynthesis; chorismate biosynthesis; chorismate from D-erythrose 4-phosphate and phosphoenolpyruvate: step 5/7. Its function is as follows. Catalyzes the specific phosphorylation of the 3-hydroxyl group of shikimic acid using ATP as a cosubstrate. This is Bifunctional shikimate kinase/3-dehydroquinate synthase (aroKB) from Thermotoga maritima (strain ATCC 43589 / DSM 3109 / JCM 10099 / NBRC 100826 / MSB8).